A 132-amino-acid polypeptide reads, in one-letter code: Protein NrdI (132 aa).

The protein belongs to the NrdI family.

Its function is as follows. Probably involved in ribonucleotide reductase function. The sequence is that of Protein NrdI from Staphylococcus aureus (strain Mu3 / ATCC 700698).